Reading from the N-terminus, the 415-residue chain is Probable cytosolic iron-sulfur protein assembly protein 1 (415 aa).

One copy of the WD 1 repeat lies at 9 to 48 (AHDDKVWSLSSHPTLPLLATASTDKCSNIYRLSCSNASSS). The tract at residues 45–70 (ASSSSSSSSPPSPPSPPSSSSPRRNF) is disordered. Over residues 54–63 (PPSPPSPPSS) the composition is skewed to pro residues. WD repeat units lie at residues 79–131 (THRR…DDNT), 160–200 (GHEN…EEFE), 207–246 (DHTQ…DEWS), 253–300 (GHEG…GFNG), 335–374 (IHTH…WEVE), and 380–415 (AHGV…IWEV).

This sequence belongs to the WD repeat CIA1 family. Interacts with NAR1.

The protein resides in the cytoplasm. Its subcellular location is the nucleus. In terms of biological role, essential component of the cytosolic iron-sulfur (Fe/S) protein assembly machinery. Required for the maturation of extramitochondrial Fe/S proteins. In Lodderomyces elongisporus (strain ATCC 11503 / CBS 2605 / JCM 1781 / NBRC 1676 / NRRL YB-4239) (Yeast), this protein is Probable cytosolic iron-sulfur protein assembly protein 1.